The following is a 240-amino-acid chain: Venom hemolysin-like protein 1 (240 aa).

An N-terminal signal peptide occupies residues 1–18 (MQYKLILLVVGLFQASLA). The interval 25 to 50 (ESVPHPSKDVAPPDTQDSSTQTEVTT) is disordered. The span at 39-50 (TQDSSTQTEVTT) shows a compositional bias: polar residues.

In terms of tissue distribution, expressed by the venom gland (anterior main gland) (at protein level).

The protein localises to the secreted. This chain is Venom hemolysin-like protein 1, found in Platymeris rhadamanthus (Red spot assassin bug).